We begin with the raw amino-acid sequence, 239 residues long: Ribosomal RNA small subunit methyltransferase G (239 aa).

Residues glycine 95, leucine 100, 118–120 (EAT), 146–147 (AE), and arginine 164 each bind S-adenosyl-L-methionine.

It belongs to the methyltransferase superfamily. RNA methyltransferase RsmG family.

The protein localises to the cytoplasm. It catalyses the reaction guanosine(527) in 16S rRNA + S-adenosyl-L-methionine = N(7)-methylguanosine(527) in 16S rRNA + S-adenosyl-L-homocysteine. Its function is as follows. Specifically methylates the N7 position of guanine in position 527 of 16S rRNA. This chain is Ribosomal RNA small subunit methyltransferase G, found in Sorangium cellulosum (strain So ce56) (Polyangium cellulosum (strain So ce56)).